Reading from the N-terminus, the 103-residue chain is Gibberellin-regulated protein 13 (103 aa).

An N-terminal signal peptide occupies residues 1 to 20; it reads MATKLSIIVFSIVVLHLLLS.

This sequence belongs to the GASA family. Post-translationally, six disulfide bonds may be present.

The protein resides in the secreted. In terms of biological role, gibberellin-regulated protein that may function in hormonal controlled steps of development such as seed germination, flowering and seed maturation. The chain is Gibberellin-regulated protein 13 (GASA13) from Arabidopsis thaliana (Mouse-ear cress).